Here is a 124-residue protein sequence, read N- to C-terminus: MADDRKALGRWGEQYAAEYLQQLGYQLIASGWHCRWGEIDLIAYDQATLVIIEVRTRRGTAHGSAAESLTLKKRQRLARLLQAYLQALDAAQTPWLGDYRIDAIAITLSRGQPQLEHFQAISIE.

The protein belongs to the UPF0102 family.

The polypeptide is UPF0102 protein Haur_0145 (Herpetosiphon aurantiacus (strain ATCC 23779 / DSM 785 / 114-95)).